The sequence spans 1055 residues: Leukotoxin (1055 aa).

Residues 11–49 (QQAAQFANSVADRAKENIDAAKEQLQKALDKLGKTGKKL) adopt a coiled-coil conformation. Cholesterol recognition/amino acid consensus (CRAC) region stretches follow at residues 334–340 (LEEYSKR) and 502–506 (VDYLK). 7 Hemolysin-type calcium-binding repeats span residues 721–738 (IGST…NDVF), 739–756 (HGHD…DDRL), 757–774 (YGDN…NDKL), 775–792 (YGGA…NNYL), 793–810 (DGGE…SDIL), 811–828 (RGGS…DDLL), and 829–846 (DGGE…NDIY). The interval 795 to 815 (GEGDDHLEGGNGSDILRGGSG) is disordered. The tract at residues 990–1009 (KGKSSSLMSSSRSSSMLTQK) is disordered. The span at 993–1006 (SSSLMSSSRSSSML) shows a compositional bias: low complexity.

The protein belongs to the RTX prokaryotic toxin (TC 1.C.11) family. Interacts specifically with the superoxide dismutase [Cu-Zn]. This interaction may protect LtxA from reactive oxygen species and reactive nitrogen species produced by host inflammatory cells during disease. Interacts with the human leukocyte adhesion glycoprotein LFA-1 (ITGAL-ITGB2). In terms of processing, acylated at Lys-562 and Lys-687 by LtxC. This modification is required for full activity. Isolated methyl esters contain palmitoyl and palmitolyl fatty acyl groups with smaller quantities of myristic and stearic fatty acids.

It localises to the cell outer membrane. The protein localises to the secreted. Virulence factor that plays an important role in immune evasion. Lyses human lymphocytes and monocytes. Binds to the LFA-1 integrin on the surface of the host cell and to cholesterol-containing membranes, which probably results in large LtxA-LFA-1 clusters in lipid rafts. Also shows beta-hemolytic activity on certain types of growth media. The protein is Leukotoxin of Aggregatibacter actinomycetemcomitans (Actinobacillus actinomycetemcomitans).